The sequence spans 904 residues: Envelope glycoprotein B (904 aa).

The N-terminal stretch at 1-22 (MRGGGLICALVVGALVAAVASA) is a signal peptide. Topologically, residues 23–771 (APAAPAAPRA…SGVSSFMSNP (749 aa)) are virion surface. Residues 40-83 (VAANGGPASRPPPVPSPATTKARKRKTKKPPKRPEATPPPDANA) form a disordered region. Over residues 60–70 (KARKRKTKKPP) the composition is skewed to basic residues. Residues Asn-82 and Asn-136 are each glycosylated (N-linked (GlcNAc...) asparagine; by host). 5 cysteine pairs are disulfide-bonded: Cys-111–Cys-570, Cys-128–Cys-526, Cys-202–Cys-266, Cys-359–Cys-407, and Cys-593–Cys-630. Involved in fusion and/or binding to host membrane regions lie at residues 168-174 (VWFGHRY) and 253-260 (RVEAFHRY). Residues Asn-393, Asn-425, and Asn-486 are each glycosylated (N-linked (GlcNAc...) asparagine; by host). The interval 467–490 (QDRKPRNATPAPLREAPSANASVE) is disordered. An N-linked (GlcNAc...) asparagine; by host glycan is attached at Asn-671. Hydrophobic membrane proximal region regions lie at residues 716–769 (IDTV…SFMS) and 728–768 (MFAG…SSFM). Residues 772 to 792 (FGALAVGLLVLAGLVAAFFAF) form a helical membrane-spanning segment. The Intravirion segment spans residues 793-904 (RYVLQLQRNP…EDEAGDEDEL (112 aa)). Positions 816-835 (TSDPGGVGGEGEEGAEGGGF) are disordered. A Golgi targeting motif is present at residues 849–852 (YMAL). The segment at 883–904 (KRNKARYSPLHNEDEAGDEDEL) is disordered. The Internalization motif motif lies at 889–892 (YSPL).

It belongs to the herpesviridae glycoprotein B family. Homotrimer; disulfide-linked. Binds to heparan sulfate proteoglycans. Interacts with gH/gL heterodimer.

Its subcellular location is the virion membrane. It localises to the host cell membrane. The protein localises to the host endosome membrane. It is found in the host Golgi apparatus membrane. In terms of biological role, envelope glycoprotein that forms spikes at the surface of virion envelope. Essential for the initial attachment to heparan sulfate moieties of the host cell surface proteoglycans. Involved in fusion of viral and cellular membranes leading to virus entry into the host cell. Following initial binding to its host receptors, membrane fusion is mediated by the fusion machinery composed at least of gB and the heterodimer gH/gL. May be involved in the fusion between the virion envelope and the outer nuclear membrane during virion egress. The polypeptide is Envelope glycoprotein B (Homo sapiens (Human)).